The sequence spans 335 residues: 1D-myo-inositol 2-acetamido-2-deoxy-alpha-D-glucopyranoside deacetylase (335 aa).

Zn(2+) is bound by residues His-19, Asp-22, and His-158.

Belongs to the MshB deacetylase family. The cofactor is Zn(2+).

It catalyses the reaction 1D-myo-inositol 2-acetamido-2-deoxy-alpha-D-glucopyranoside + H2O = 1D-myo-inositol 2-amino-2-deoxy-alpha-D-glucopyranoside + acetate. In terms of biological role, catalyzes the deacetylation of 1D-myo-inositol 2-acetamido-2-deoxy-alpha-D-glucopyranoside (GlcNAc-Ins) in the mycothiol biosynthesis pathway. This chain is 1D-myo-inositol 2-acetamido-2-deoxy-alpha-D-glucopyranoside deacetylase, found in Corynebacterium urealyticum (strain ATCC 43042 / DSM 7109).